The following is a 600-amino-acid chain: MPEHILVAVAWPYANGPRHIGHVAGFGVPADIFARYHRLRGNHVLMISGTDEHGTPITLVADKEGTTPQAIADRYNKIIGDDLYNLGLSYDIFTRTTTANHYAVTQDIFRTLYERGYIIRQETLGAFSATTGRTLPDRYIEGTCPICGYDEARGDQCDNCGSQLDPTDLINPRSKVDGQPPVFKPTEHFFLDLPAFAEQLHAWIDRQTHWRPNVRNFSLNFLKELKPRAITRDLEWGVPIPLPEYVHRDDKKIYVWFDAVIGYLSASIEWARNSGQPDAWRTWWQNPAARHFYFMGKDNIVFHTVIWPAMLLGYGAGGDFGTDPSGTYQGVPLQLPYNVVSSEFLTMEGKKFSSSRGIVIYVNDFLSRYDADALRYFLTIAGPENQDTDFTWAEFVRRNNDELVATWGNLVNRTLTNVYKNFGSVPQPGPLTATDEQLIQEVNGGLETVGDLLATARFKAALSEAMRLAAQVNIYLSEQEPWKVIKSDRERAATIWYVALRCVDTLKIIFTPFLPFSSQRLHEYLGYDGYIAGPLSFRDVTEADGRVHRVLTGNYAEWVGRWQPSALPVGQALRQPQPLFKKLDEKVVDEELARMQSRAS.

The 'HIGH' region signature appears at 12–22 (PYANGPRHIGH). Zn(2+) is bound by residues C144, C147, C157, and C160. The 'KMSKS' region signature appears at 351 to 355 (KFSSS). Position 354 (S354) interacts with ATP.

The protein belongs to the class-I aminoacyl-tRNA synthetase family. MetG type 1 subfamily. In terms of assembly, monomer. Zn(2+) is required as a cofactor.

Its subcellular location is the cytoplasm. The catalysed reaction is tRNA(Met) + L-methionine + ATP = L-methionyl-tRNA(Met) + AMP + diphosphate. Functionally, is required not only for elongation of protein synthesis but also for the initiation of all mRNA translation through initiator tRNA(fMet) aminoacylation. In Chloroflexus aurantiacus (strain ATCC 29364 / DSM 637 / Y-400-fl), this protein is Methionine--tRNA ligase.